The following is a 334-amino-acid chain: Retinol dehydrogenase 13 (334 aa).

Position 2 is an N-acetylserine (serine 2). 45 to 51 (GANTGIG) lines the NADP(+) pocket. Residue serine 174 participates in substrate binding. The active-site Proton acceptor is tyrosine 200.

It belongs to the short-chain dehydrogenases/reductases (SDR) family.

Its subcellular location is the mitochondrion inner membrane. The catalysed reaction is all-trans-retinol + NADP(+) = all-trans-retinal + NADPH + H(+). The protein operates within cofactor metabolism; retinol metabolism. Functionally, retinol dehydrogenase with a clear preference for NADP. Oxidizes all-trans-retinol, but seems to reduce all-trans-retinal with much higher efficiency. Has no activity towards steroid. The protein is Retinol dehydrogenase 13 (Rdh13) of Mus musculus (Mouse).